We begin with the raw amino-acid sequence, 103 residues long: NADH dehydrogenase [ubiquinone] 1 beta subcomplex subunit 7 (103 aa).

One can recognise a CHCH domain in the interval Arg-27–Arg-69. Short sequence motifs (cx9C motif) lie at residues Cys-30–Cys-40 and Cys-51–Cys-61. 2 disulfide bridges follow: Cys-30/Cys-61 and Cys-40/Cys-51.

Belongs to the complex I NDUFB7 subunit family. Complex I is composed of at least 49 different subunits.

The protein localises to the mitochondrion. It is found in the mitochondrion inner membrane. The protein resides in the mitochondrion intermembrane space. Accessory subunit of the mitochondrial membrane respiratory chain NADH dehydrogenase (Complex I), that is believed not to be involved in catalysis. Complex I functions in the transfer of electrons from NADH to the respiratory chain. The immediate electron acceptor for the enzyme is believed to be ubiquinone. The protein is NADH dehydrogenase [ubiquinone] 1 beta subcomplex subunit 7 of Arabidopsis thaliana (Mouse-ear cress).